A 202-amino-acid chain; its full sequence is GMP synthase [glutamine-hydrolyzing] subunit A (202 aa).

In terms of domain architecture, Glutamine amidotransferase type-1 spans 4–194 (KIYVVDNGGQ…IAICQQHKEK (191 aa)). Catalysis depends on Cys-81, which acts as the Nucleophile. Residues His-168 and Glu-170 contribute to the active site.

Heterodimer composed of a glutamine amidotransferase subunit (A) and a GMP-binding subunit (B).

It carries out the reaction XMP + L-glutamine + ATP + H2O = GMP + L-glutamate + AMP + diphosphate + 2 H(+). Its pathway is purine metabolism; GMP biosynthesis; GMP from XMP (L-Gln route): step 1/1. In terms of biological role, catalyzes the synthesis of GMP from XMP. The protein is GMP synthase [glutamine-hydrolyzing] subunit A of Thermoplasma volcanium (strain ATCC 51530 / DSM 4299 / JCM 9571 / NBRC 15438 / GSS1).